The following is a 275-amino-acid chain: Large ribosomal subunit protein uL2 (275 aa).

A disordered region spans residues G222 to K275. The span at D229 to N239 shows a compositional bias: basic and acidic residues.

This sequence belongs to the universal ribosomal protein uL2 family. As to quaternary structure, part of the 50S ribosomal subunit. Forms a bridge to the 30S subunit in the 70S ribosome.

Its function is as follows. One of the primary rRNA binding proteins. Required for association of the 30S and 50S subunits to form the 70S ribosome, for tRNA binding and peptide bond formation. It has been suggested to have peptidyltransferase activity; this is somewhat controversial. Makes several contacts with the 16S rRNA in the 70S ribosome. The protein is Large ribosomal subunit protein uL2 of Psychrobacter arcticus (strain DSM 17307 / VKM B-2377 / 273-4).